We begin with the raw amino-acid sequence, 159 residues long: RNA pyrophosphohydrolase (159 aa).

One can recognise a Nudix hydrolase domain in the interval 6 to 149; sequence GFRPNVGIIL…KREVYRRALK (144 aa). The short motif at 38 to 59 is the Nudix box element; the sequence is GGINDRESPEEALYRELNEEVG.

The protein belongs to the Nudix hydrolase family. RppH subfamily. Requires a divalent metal cation as cofactor.

In terms of biological role, accelerates the degradation of transcripts by removing pyrophosphate from the 5'-end of triphosphorylated RNA, leading to a more labile monophosphorylated state that can stimulate subsequent ribonuclease cleavage. The chain is RNA pyrophosphohydrolase from Ectopseudomonas mendocina (strain ymp) (Pseudomonas mendocina).